We begin with the raw amino-acid sequence, 184 residues long: MNRPVKGAADKAGKPKVKRKTREELEREARERKKDKKHRGHVAGSRTQEKASTDQRSGQRKAADPRIGSKKPVPLGVLDSAVAKPKPKSKPSAPVENVVAAKPTMSPEEELEMLENDSRLDALLDRLDSGETLSAKDQSWVDETLDRIDILMEELGIELGDDDEEEPQEDMLQLLKRNNPKDAF.

The tract at residues 1-107 is disordered; it reads MNRPVKGAAD…VVAAKPTMSP (107 aa). Residues 21–32 show a composition bias toward basic and acidic residues; that stretch reads TREELEREARER. Residues 80 to 95 show a composition bias toward low complexity; the sequence is SAVAKPKPKSKPSAPV.

The protein belongs to the YihI family. Interacts with Der.

Its function is as follows. A GTPase-activating protein (GAP) that modifies Der/EngA GTPase function. May play a role in ribosome biogenesis. The sequence is that of Der GTPase-activating protein YihI from Pectobacterium carotovorum subsp. carotovorum (strain PC1).